Consider the following 283-residue polypeptide: Polyamine aminopropyltransferase (283 aa).

One can recognise a PABS domain in the interval 5-238 (TTWIDEYHKG…GIWSWTFASS (234 aa)). Gln32 contributes to the S-methyl-5'-thioadenosine binding site. Positions 63 and 87 each coordinate spermidine. S-methyl-5'-thioadenosine-binding positions include Glu107 and 139–140 (DG). Asp158 serves as the catalytic Proton acceptor. Position 158–161 (158–161 (DCSD)) interacts with spermidine.

Belongs to the spermidine/spermine synthase family. As to quaternary structure, homodimer or homotetramer.

It is found in the cytoplasm. The enzyme catalyses S-adenosyl 3-(methylsulfanyl)propylamine + putrescine = S-methyl-5'-thioadenosine + spermidine + H(+). It functions in the pathway amine and polyamine biosynthesis; spermidine biosynthesis; spermidine from putrescine: step 1/1. Functionally, catalyzes the irreversible transfer of a propylamine group from the amino donor S-adenosylmethioninamine (decarboxy-AdoMet) to putrescine (1,4-diaminobutane) to yield spermidine. The polypeptide is Polyamine aminopropyltransferase (Prochlorococcus marinus (strain AS9601)).